The chain runs to 356 residues: 1-deoxy-D-xylulose 5-phosphate reductoisomerase (356 aa).

NADPH is bound by residues threonine 7, glycine 8, serine 9, isoleucine 10, glycine 31, asparagine 33, and asparagine 111. A 1-deoxy-D-xylulose 5-phosphate-binding site is contributed by lysine 112. Glutamate 113 contacts NADPH. Mn(2+) is bound at residue aspartate 131. 1-deoxy-D-xylulose 5-phosphate is bound by residues serine 132, glutamate 133, serine 155, and histidine 178. Mn(2+) is bound at residue glutamate 133. Glycine 184 serves as a coordination point for NADPH. Positions 191, 196, 197, and 200 each coordinate 1-deoxy-D-xylulose 5-phosphate. A Mn(2+)-binding site is contributed by glutamate 200.

The protein belongs to the DXR family. It depends on Mg(2+) as a cofactor. Mn(2+) serves as cofactor.

The catalysed reaction is 2-C-methyl-D-erythritol 4-phosphate + NADP(+) = 1-deoxy-D-xylulose 5-phosphate + NADPH + H(+). It participates in isoprenoid biosynthesis; isopentenyl diphosphate biosynthesis via DXP pathway; isopentenyl diphosphate from 1-deoxy-D-xylulose 5-phosphate: step 1/6. Its function is as follows. Catalyzes the NADPH-dependent rearrangement and reduction of 1-deoxy-D-xylulose-5-phosphate (DXP) to 2-C-methyl-D-erythritol 4-phosphate (MEP). In Campylobacter jejuni (strain RM1221), this protein is 1-deoxy-D-xylulose 5-phosphate reductoisomerase.